The primary structure comprises 147 residues: Large ribosomal subunit protein uL15 (147 aa).

Residues methionine 1–proline 57 form a disordered region. The segment covering proline 10–glycine 21 has biased composition (basic residues). Gly residues predominate over residues arginine 22–glutamine 36. Basic residues predominate over residues lysine 37 to arginine 46.

This sequence belongs to the universal ribosomal protein uL15 family. As to quaternary structure, part of the 50S ribosomal subunit.

Binds to the 23S rRNA. The polypeptide is Large ribosomal subunit protein uL15 (Mycoplasmoides gallisepticum (strain R(low / passage 15 / clone 2)) (Mycoplasma gallisepticum)).